The following is a 221-amino-acid chain: UPF0502 protein VSAL_II0605 (221 aa).

This sequence belongs to the UPF0502 family.

In Aliivibrio salmonicida (strain LFI1238) (Vibrio salmonicida (strain LFI1238)), this protein is UPF0502 protein VSAL_II0605.